A 640-amino-acid chain; its full sequence is Preterminal protein (640 aa).

Residues 232-257 (PSQEGEGEERENPDRASSRPRPQETV) are disordered. The short motif at 351–360 (RLPVRRRRRR) is the Nuclear localization signal element. S549 carries the post-translational modification O-(5'-phospho-DNA)-serine. Positions 614–640 (GADVPLPAMPPGPEPPLPPGARPRHRF) are disordered. Residues 620 to 634 (PAMPPGPEPPLPPGA) show a composition bias toward pro residues.

It belongs to the adenoviridae terminal protein family. As to quaternary structure, heterodimer with the polymerase; this heterodimer binds to bp 9 to 18 of the genome. Interacts with host POU2F1; POU2F1 binds to the auxiliary sequences in the inverted terminal repeats and tethers the pTP-POL heterodimer to the origin DNA thereby participating in the assembly of the pre-initiation complex (POL-TP-DBP-NFIA-POU2F1). Preterminal protein is used to replicate viral genome, upon genomic encapsidation it is processed first into iTP and finally into TP by adenovirus protease.

The protein localises to the host nucleus matrix. Functionally, protein covalently bound to the viral DNA that acts as a primer for viral genomic replication by DNA strand displacement. Assembles on the viral origin of replication in an initiation complex with viral polymerase, DBP, host NFIA and host POU2F1/OCT1. During initiation, the polymerase covalently couples the first dCTP with Ser-580 of pTP. The terminal protein stimulates the template activity over 20 fold compared to protein-free templates. Neo-synthesized viral genomes are linked to two preterminal proteins, one for each 5' end. These new genomes are encapsidated in the nucleus, and during capsid maturation by viral protease, preterminal protein is first cleaved into intermediary (iTP), then into mature TP. May play a role in host nuclear matrix localization of genomic DNA. The protein is Preterminal protein of Human adenovirus B serotype 7 (HAdV-7).